The primary structure comprises 327 residues: tRNA dimethylallyltransferase (327 aa).

14–21 (GPTASGKT) provides a ligand contact to ATP. A substrate-binding site is contributed by 16-21 (TASGKT). Interaction with substrate tRNA regions lie at residues 39–42 (DSAL) and 163–167 (QRIQR).

The protein belongs to the IPP transferase family. As to quaternary structure, monomer. Mg(2+) serves as cofactor.

It catalyses the reaction adenosine(37) in tRNA + dimethylallyl diphosphate = N(6)-dimethylallyladenosine(37) in tRNA + diphosphate. Catalyzes the transfer of a dimethylallyl group onto the adenine at position 37 in tRNAs that read codons beginning with uridine, leading to the formation of N6-(dimethylallyl)adenosine (i(6)A). The polypeptide is tRNA dimethylallyltransferase (Xanthomonas oryzae pv. oryzae (strain PXO99A)).